The sequence spans 379 residues: Chaperone protein DnaJ (379 aa).

Residues 5–70 form the J domain; that stretch reads DYYEVLGVGK…EKKAAYDQYG (66 aa). Residues 139 to 217 form a CR-type zinc finger; the sequence is GHEAQIRVPH…CHGQGKLKSQ (79 aa). Zn(2+) contacts are provided by Cys-152, Cys-155, Cys-169, Cys-172, Cys-191, Cys-194, Cys-205, and Cys-208. CXXCXGXG motif repeat units follow at residues 152 to 159, 169 to 176, 191 to 198, and 205 to 212; these read CEHCHGNG, CPTCNGVG, CPKCHGSG, and CTKCHGQG.

Belongs to the DnaJ family. As to quaternary structure, homodimer. Requires Zn(2+) as cofactor.

The protein resides in the cytoplasm. Its function is as follows. Participates actively in the response to hyperosmotic and heat shock by preventing the aggregation of stress-denatured proteins and by disaggregating proteins, also in an autonomous, DnaK-independent fashion. Unfolded proteins bind initially to DnaJ; upon interaction with the DnaJ-bound protein, DnaK hydrolyzes its bound ATP, resulting in the formation of a stable complex. GrpE releases ADP from DnaK; ATP binding to DnaK triggers the release of the substrate protein, thus completing the reaction cycle. Several rounds of ATP-dependent interactions between DnaJ, DnaK and GrpE are required for fully efficient folding. Also involved, together with DnaK and GrpE, in the DNA replication of plasmids through activation of initiation proteins. The polypeptide is Chaperone protein DnaJ (Cupriavidus metallidurans (strain ATCC 43123 / DSM 2839 / NBRC 102507 / CH34) (Ralstonia metallidurans)).